The chain runs to 211 residues: N-(5'-phosphoribosyl)anthranilate isomerase (211 aa).

The protein belongs to the TrpF family.

The enzyme catalyses N-(5-phospho-beta-D-ribosyl)anthranilate = 1-(2-carboxyphenylamino)-1-deoxy-D-ribulose 5-phosphate. It functions in the pathway amino-acid biosynthesis; L-tryptophan biosynthesis; L-tryptophan from chorismate: step 3/5. In Pseudomonas aeruginosa (strain LESB58), this protein is N-(5'-phosphoribosyl)anthranilate isomerase.